The primary structure comprises 50 residues: Photosystem II reaction center protein M (50 aa).

Residues 6–26 traverse the membrane as a helical segment; it reads FGFVASLLFVGVPTIFLIGLF.

This sequence belongs to the PsbM family. PSII is composed of 1 copy each of membrane proteins PsbA, PsbB, PsbC, PsbD, PsbE, PsbF, PsbH, PsbI, PsbJ, PsbK, PsbL, PsbM, PsbT, PsbX, PsbY, Psb30/Ycf12, peripheral proteins PsbO, CyanoQ (PsbQ), PsbU, PsbV and a large number of cofactors. It forms dimeric complexes.

Its subcellular location is the cellular thylakoid membrane. Its function is as follows. One of the components of the core complex of photosystem II (PSII). PSII is a light-driven water:plastoquinone oxidoreductase that uses light energy to abstract electrons from H(2)O, generating O(2) and a proton gradient subsequently used for ATP formation. It consists of a core antenna complex that captures photons, and an electron transfer chain that converts photonic excitation into a charge separation. This subunit is found at the monomer-monomer interface. This Prochlorococcus marinus (strain MIT 9215) protein is Photosystem II reaction center protein M.